A 418-amino-acid polypeptide reads, in one-letter code: MLHPRARTMLLLSLPAVAIGIASSLILIVVMKIASVLQNLLWLRLPGTLGIAQDSPFWIIAILTLTGIAVGLVIRFSQGHAGPDPACEPLIGAPVPPSALPGLIVALILGLAGGVSLGPEHPIMTVNIALAVAIGARLLPRVNRMEWTILASAGTIGALFGTPVAAALIFSQTLNGSSEVPLWDRLFAPLMAAAAGALTTGLFFHPHFSLPIAHYGQMEMTDILSGAIVAAIAIAAGMIAVWCLPRLHAMMHQIKNPVLMLGVGGFILGILGVIAGPVSLFKGLDEMQQMVANQAFSTSDYFLLAVIKLAALVVAAASGFRGGRIFPAVFVGVALGLMLHEHVPAVPAAITVSCAILGIVLVVTRDGWLSLFMAAVVVPNTTLLPLLCIVMLPAWLLLAGKPMMMVNRPKQQPPHDNV.

12 consecutive transmembrane segments (helical) span residues 10–30 (LLLSLPAVAIGIASSLILIVV), 54–74 (DSPFWIIAILTLTGIAVGLVI), 99–119 (ALPGLIVALILGLAGGVSLGP), 120–140 (EHPIMTVNIALAVAIGARLLP), 149–169 (ILASAGTIGALFGTPVAAALI), 186–206 (LFAPLMAAAAGALTTGLFFHP), 223–243 (ILSGAIVAAIAIAAGMIAVWC), 258–278 (VLMLGVGGFILGILGVIAGPV), 300–320 (DYFLLAVIKLAALVVAAASGF), 322–342 (GGRIFPAVFVGVALGLMLHEH), 343–363 (VPAVPAAITVSCAILGIVLVV), and 371–391 (LFMAAVVVPNTTLLPLLCIVM).

The protein belongs to the chloride channel (TC 2.A.49) family.

The protein localises to the cell membrane. This chain is Putative ion-transport protein YfeO, found in Escherichia coli O7:K1 (strain IAI39 / ExPEC).